Consider the following 365-residue polypeptide: tRNA-specific 2-thiouridylase MnmA (365 aa).

ATP contacts are provided by residues 6–13 (AMSGGVDS) and L32. C101 acts as the Nucleophile in catalysis. C101 and C199 are disulfide-bonded. G125 contributes to the ATP binding site. The interaction with tRNA stretch occupies residues 149-151 (KDQ). The active-site Cysteine persulfide intermediate is the C199.

It belongs to the MnmA/TRMU family.

It is found in the cytoplasm. The enzyme catalyses S-sulfanyl-L-cysteinyl-[protein] + uridine(34) in tRNA + AH2 + ATP = 2-thiouridine(34) in tRNA + L-cysteinyl-[protein] + A + AMP + diphosphate + H(+). Its function is as follows. Catalyzes the 2-thiolation of uridine at the wobble position (U34) of tRNA, leading to the formation of s(2)U34. This chain is tRNA-specific 2-thiouridylase MnmA, found in Corynebacterium efficiens (strain DSM 44549 / YS-314 / AJ 12310 / JCM 11189 / NBRC 100395).